The following is a 446-amino-acid chain: Chromosomal replication initiator protein DnaA (446 aa).

The domain I, interacts with DnaA modulators stretch occupies residues 1–92 (MENISDLWNS…SQAEEEIDLP (92 aa)). Residues 93-109 (PSKPNAAQDDSNHLPQS) are domain II. The interval 110 to 326 (MLNPKYTFDT…GALIRVVAYS (217 aa)) is domain III, AAA+ region. Positions 154, 156, 157, and 158 each coordinate ATP. The tract at residues 327–446 (SLINKDINAD…QVEEINDILK (120 aa)) is domain IV, binds dsDNA.

It belongs to the DnaA family. In terms of assembly, oligomerizes as a right-handed, spiral filament on DNA at oriC.

It is found in the cytoplasm. Functionally, plays an essential role in the initiation and regulation of chromosomal replication. ATP-DnaA binds to the origin of replication (oriC) to initiate formation of the DNA replication initiation complex once per cell cycle. Binds the DnaA box (a 9 base pair repeat at the origin) and separates the double-stranded (ds)DNA. Forms a right-handed helical filament on oriC DNA; dsDNA binds to the exterior of the filament while single-stranded (ss)DNA is stabiized in the filament's interior. The ATP-DnaA-oriC complex binds and stabilizes one strand of the AT-rich DNA unwinding element (DUE), permitting loading of DNA polymerase. After initiation quickly degrades to an ADP-DnaA complex that is not apt for DNA replication. Binds acidic phospholipids. This chain is Chromosomal replication initiator protein DnaA, found in Bacillus cereus (strain 03BB102).